Consider the following 564-residue polypeptide: Bifunctional sesquiterpene synthase 1 (564 aa).

D317, D321, D461, and E469 together coordinate Mg(2+). The DDXXD motif motif lies at D317–D321.

Belongs to the terpene synthase family. The cofactor is Mg(2+).

The enzyme catalyses (2E,6E)-farnesyl diphosphate = alpha-copaene + diphosphate. It catalyses the reaction (2E,6E)-farnesyl diphosphate = delta-cadinene + diphosphate. The protein operates within secondary metabolite biosynthesis; terpenoid biosynthesis. Sesquiterpene synthase converting farnesyl diphosphate to alpha copaene and delta-cadinene as the major products. The chain is Bifunctional sesquiterpene synthase 1 from Phyla dulcis (Aztec sweet herb).